We begin with the raw amino-acid sequence, 444 residues long: tRNA modification GTPase MnmE (444 aa).

(6S)-5-formyl-5,6,7,8-tetrahydrofolate-binding residues include Arg-22, Glu-79, and Arg-118. The region spanning 214–368 is the TrmE-type G domain; the sequence is GMQVVLAGPP…LRDHLKSVMG (155 aa). Position 224 (Asn-224) interacts with K(+). GTP is bound by residues 224 to 229, 243 to 249, and 268 to 271; these read NAGKSS, TEVPGTT, and DTAG. Ser-228 lines the Mg(2+) pocket. Residues Thr-243, Val-245, and Thr-248 each contribute to the K(+) site. Thr-249 contacts Mg(2+). Residue Lys-444 coordinates (6S)-5-formyl-5,6,7,8-tetrahydrofolate.

The protein belongs to the TRAFAC class TrmE-Era-EngA-EngB-Septin-like GTPase superfamily. TrmE GTPase family. Homodimer. Heterotetramer of two MnmE and two MnmG subunits. K(+) is required as a cofactor.

Its subcellular location is the cytoplasm. Its function is as follows. Exhibits a very high intrinsic GTPase hydrolysis rate. Involved in the addition of a carboxymethylaminomethyl (cmnm) group at the wobble position (U34) of certain tRNAs, forming tRNA-cmnm(5)s(2)U34. The sequence is that of tRNA modification GTPase MnmE from Alkalilimnicola ehrlichii (strain ATCC BAA-1101 / DSM 17681 / MLHE-1).